Here is a 771-residue protein sequence, read N- to C-terminus: Tubulin monoglycylase TTLL3 (771 aa).

Residues 70-106 form a disordered region; it reads PRPSFSQPRRHDHETETTDEGDSSDEDDLGEEVERDD. A compositionally biased stretch (acidic residues) spans 86–106; that stretch reads TTDEGDSSDEDDLGEEVERDD. The TTL domain occupies 220 to 566; the sequence is EGEKMGEVHN…RRSERNTDTG (347 aa). ATP-binding positions include Lys339, 345–346, 377–380, 390–392, and 434–435; these read RG, QKYI, KFD, and CN. Arg345 contacts a protein. Residue Ser437 coordinates L-glutamate. Asp512, Glu525, and Asn527 together coordinate Mg(2+). Residue Glu525 participates in ATP binding. 2 disordered regions span residues 605 to 640 and 682 to 713; these read LIQSHPEPLSKSTNHKSSLLSSPCTSGKENQSEEVK and TELHHPQRLSHTQPQSDRPHTHRTRSNLPTLY. Positions 614–633 are enriched in polar residues; that stretch reads SKSTNHKSSLLSSPCTSGKE.

Mg(2+) serves as cofactor.

The protein resides in the cytoplasm. It is found in the cytoskeleton. It localises to the cell projection. The protein localises to the cilium. Its subcellular location is the cilium axoneme. The protein resides in the flagellum axoneme. It carries out the reaction L-glutamyl-[protein] + glycine + ATP = glycyl-L-glutamyl-[protein] + ADP + phosphate + H(+). Its function is as follows. Monoglycylase which modifies alpha- and beta-tubulin, adding a single glycine on the gamma-carboxyl groups of specific glutamate residues to generate monoglycine side chains within the C-terminal tail of tubulin. Not involved in elongation step of the polyglycylation reaction. Preferentially glycylates a beta-tail peptide over the alpha-tail, although shifts its preference toward alpha-tail as beta-tail glutamylation increases. Competes with polyglutamylases for modification site on beta-tubulin substrate, thereby creating an anticorrelation between glycylation and glutamylation reactions. Not involved in elongation step of the polyglycylation reaction. The protein is Tubulin monoglycylase TTLL3 (ttll3) of Danio rerio (Zebrafish).